Reading from the N-terminus, the 74-residue chain is Putative antitoxin VapB48 (74 aa).

Its function is as follows. Possibly the antitoxin component of a type II toxin-antitoxin (TA) system. Its cognate toxin is VapC48 (Potential). This is Putative antitoxin VapB48 (vapB48) from Mycobacterium tuberculosis (strain CDC 1551 / Oshkosh).